The sequence spans 433 residues: UDP-N-acetylglucosamine 1-carboxyvinyltransferase (433 aa).

22–23 (KN) contributes to the phosphoenolpyruvate binding site. Arginine 96 contacts UDP-N-acetyl-alpha-D-glucosamine. Cysteine 120 functions as the Proton donor in the catalytic mechanism. Position 120 is a 2-(S-cysteinyl)pyruvic acid O-phosphothioketal (cysteine 120). Residues 125–129 (RPIDL), aspartate 308, and isoleucine 330 each bind UDP-N-acetyl-alpha-D-glucosamine.

This sequence belongs to the EPSP synthase family. MurA subfamily.

It localises to the cytoplasm. It catalyses the reaction phosphoenolpyruvate + UDP-N-acetyl-alpha-D-glucosamine = UDP-N-acetyl-3-O-(1-carboxyvinyl)-alpha-D-glucosamine + phosphate. Its pathway is cell wall biogenesis; peptidoglycan biosynthesis. Functionally, cell wall formation. Adds enolpyruvyl to UDP-N-acetylglucosamine. This Koribacter versatilis (strain Ellin345) protein is UDP-N-acetylglucosamine 1-carboxyvinyltransferase.